The chain runs to 278 residues: Indole-3-glycerol phosphate synthase (278 aa).

It belongs to the TrpC family.

It catalyses the reaction 1-(2-carboxyphenylamino)-1-deoxy-D-ribulose 5-phosphate + H(+) = (1S,2R)-1-C-(indol-3-yl)glycerol 3-phosphate + CO2 + H2O. It functions in the pathway amino-acid biosynthesis; L-tryptophan biosynthesis; L-tryptophan from chorismate: step 4/5. The chain is Indole-3-glycerol phosphate synthase from Pseudomonas aeruginosa (strain LESB58).